The chain runs to 395 residues: Acetate kinase (395 aa).

N7 serves as a coordination point for Mg(2+). Position 14 (K14) interacts with ATP. R85 is a substrate binding site. D142 serves as the catalytic Proton donor/acceptor. ATP contacts are provided by residues 202–206 (HLGNG), 277–279 (DMR), and 325–329 (GIGEN). A Mg(2+)-binding site is contributed by E378.

The protein belongs to the acetokinase family. As to quaternary structure, homodimer. Requires Mg(2+) as cofactor. It depends on Mn(2+) as a cofactor.

Its subcellular location is the cytoplasm. The catalysed reaction is acetate + ATP = acetyl phosphate + ADP. Its pathway is metabolic intermediate biosynthesis; acetyl-CoA biosynthesis; acetyl-CoA from acetate: step 1/2. Its function is as follows. Catalyzes the formation of acetyl phosphate from acetate and ATP. Can also catalyze the reverse reaction. The chain is Acetate kinase from Deinococcus geothermalis (strain DSM 11300 / CIP 105573 / AG-3a).